The primary structure comprises 68 residues: ATP synthase subunit c (68 aa).

2 consecutive transmembrane segments (helical) span residues 5–25 and 47–67; these read AAAIAIGLAALGAGLGNGMIV and FIGVALVEAIPIIAAVIAFMV.

It belongs to the ATPase C chain family. As to quaternary structure, F-type ATPases have 2 components, F(1) - the catalytic core - and F(0) - the membrane proton channel. F(1) has five subunits: alpha(3), beta(3), gamma(1), delta(1), epsilon(1). F(0) has three main subunits: a(1), b(2) and c(10-14). The alpha and beta chains form an alternating ring which encloses part of the gamma chain. F(1) is attached to F(0) by a central stalk formed by the gamma and epsilon chains, while a peripheral stalk is formed by the delta and b chains.

The protein resides in the cell membrane. In terms of biological role, f(1)F(0) ATP synthase produces ATP from ADP in the presence of a proton or sodium gradient. F-type ATPases consist of two structural domains, F(1) containing the extramembraneous catalytic core and F(0) containing the membrane proton channel, linked together by a central stalk and a peripheral stalk. During catalysis, ATP synthesis in the catalytic domain of F(1) is coupled via a rotary mechanism of the central stalk subunits to proton translocation. Its function is as follows. Key component of the F(0) channel; it plays a direct role in translocation across the membrane. A homomeric c-ring of between 10-14 subunits forms the central stalk rotor element with the F(1) delta and epsilon subunits. The sequence is that of ATP synthase subunit c from Oceanobacillus iheyensis (strain DSM 14371 / CIP 107618 / JCM 11309 / KCTC 3954 / HTE831).